We begin with the raw amino-acid sequence, 391 residues long: UPF0229 protein BCB4264_A0587 (391 aa).

Residues 1–16 (MGEENQPNYTISQENW) are compositionally biased toward polar residues. Disordered stretches follow at residues 1 to 31 (MGEENQPNYTISQENWSLHRKGYDDQQRHQE) and 80 to 117 (HVGQGNGDSKVGDVVARDGSGGQKQKGPGKGQGAGDAA). The segment covering 21–31 (KGYDDQQRHQE) has biased composition (basic and acidic residues). Residues 98–115 (GSGGQKQKGPGKGQGAGD) are compositionally biased toward gly residues.

It belongs to the UPF0229 family.

This is UPF0229 protein BCB4264_A0587 from Bacillus cereus (strain B4264).